The primary structure comprises 1081 residues: Importin-4 (1081 aa).

Met-1 is subject to N-acetylmethionine. In terms of domain architecture, Importin N-terminal spans 24–90 (ATEQLQIVLR…KSLILTALQR (67 aa)). HEAT repeat units lie at residues 348–385 (KLCP…GAGD), 390–427 (RLLP…NLQP), 431–471 (SYSR…NLGP), 475–513 (PYLP…AAQA), 895–932 (QFVS…HGGH), and 936–974 (EHFP…ASPT).

Belongs to the importin beta family. As to quaternary structure, found in a cytosolic complex with ASF1 (ASF1A or ASF1B) and histones H3 and H4.

The protein localises to the cytoplasm. Its subcellular location is the nucleus. Nuclear transport receptor that mediates nuclear import of proteins, such as histones, RPS3A, TNP2 and VDR. Serves as receptor for nuclear localization signals (NLS) in cargo substrates. Is thought to mediate docking of the importin/substrate complex to the nuclear pore complex (NPC) through binding to nucleoporin and the complex is subsequently translocated through the pore by an energy requiring, Ran-dependent mechanism. At the nucleoplasmic side of the NPC, Ran binds to the importin, the importin/substrate complex dissociates and importin is re-exported from the nucleus to the cytoplasm where GTP hydrolysis releases Ran. The directionality of nuclear import is thought to be conferred by an asymmetric distribution of the GTP- and GDP-bound forms of Ran between the cytoplasm and nucleus. Mediates the nuclear import of the histone H3-H4 dimer when in complex with ASF1 (ASF1A or ASF1B). Mediates the ligand-independent nuclear import of vitamin D receptor (VDR). In vitro, mediates the nuclear import of human cytomegalovirus UL84 by recognizing a non-classical NLS. This Homo sapiens (Human) protein is Importin-4 (IPO4).